We begin with the raw amino-acid sequence, 149 residues long: Inner membrane protein YfeZ (149 aa).

The Cytoplasmic portion of the chain corresponds to 1–18 (MKSTEFHPVHYDAHGRLR). A helical membrane pass occupies residues 19 to 39 (LPLLFWLVLLLQARTWVLFVI). The Periplasmic portion of the chain corresponds to 40–58 (AGASREQGTALLNLFYPDH). The helical transmembrane segment at 59 to 79 (DNFWLGLIPGIPAVLAFLLSG) threads the bilayer. Residues 80 to 89 (RRATFPRTWR) are Cytoplasmic-facing. Residues 90 to 110 (VLYFLLLLAQVVLLCWQPWLW) traverse the membrane as a helical segment. Topologically, residues 111–115 (LNGES) are periplasmic. The chain crosses the membrane as a helical span at residues 116-136 (VSGIGLALVVADIVALIWLLT). At 137–149 (NRRLRACFYEVKE) the chain is on the cytoplasmic side.

It is found in the cell inner membrane. The sequence is that of Inner membrane protein YfeZ (yfeZ) from Escherichia coli (strain K12).